The chain runs to 341 residues: Delta(1)-pyrroline-2-carboxylate/Delta(1)-piperideine-2-carboxylate reductase (341 aa).

Serine 52 functions as the Charge relay system in the catalytic mechanism. The Proton donor role is filled by histidine 53. Position 57 (arginine 57) interacts with substrate. NADP(+) is bound at residue histidine 125–leucine 129. Threonine 165 is a binding site for substrate. Aspartate 183–alanine 185 contributes to the NADP(+) binding site. Histidine 191 to glycine 192 is a substrate binding site. The active-site Charge relay system is the aspartate 193. NADP(+) contacts are provided by residues histidine 235–lysine 236 and arginine 308–arginine 314.

This sequence belongs to the LDH2/MDH2 oxidoreductase family. In terms of assembly, homodimer.

The catalysed reaction is L-pipecolate + NADP(+) = Delta(1)-piperideine-2-carboxylate + NADPH + H(+). It carries out the reaction L-proline + NADP(+) = 1-pyrroline-2-carboxylate + NADPH + H(+). The enzyme catalyses N-methyl-L-alanine + NADP(+) + H2O = methylamine + pyruvate + NADPH + H(+). Its activity is regulated as follows. Is inhibited by the substrate analog pyrrole-2-carboxylate, but not by N-formylphenylalanine. Its function is as follows. Catalyzes the reduction of both Delta(1)-pyrroline-2-carboxylate (Pyr2C) and Delta(1)-piperideine-2-carboxylate (Pip2C) to L-proline and L-pipecolate, respectively, using NADPH as the electron donor. Can use NADH instead of NADPH, although with much less efficiency. Plays an essential role in the catabolism of D-proline and D-lysine, which allows P.putida to grow on each of these amino-acids as a sole carbon source; D-lysine appears to be catabolized only through the pipecolate pathway. Can also catalyze the reverse oxidation reactions, albeit at a much lower rate. To a lesser extent, is able to catalyze in vitro the NADPH-dependent formation of N-alkyl-L-amino acids from the corresponding alpha-oxo acids and alkylamines, e.g. the formation of N-methylalanine from pyruvate and N-methylamine; cannot use ammonia as substrate for these reductive amination reactions. Shows neither malate dehydrogenase nor lactate dehydrogenase activity. This Pseudomonas putida (Arthrobacter siderocapsulatus) protein is Delta(1)-pyrroline-2-carboxylate/Delta(1)-piperideine-2-carboxylate reductase.